The primary structure comprises 271 residues: Pyrroline-5-carboxylate reductase (271 aa).

The protein belongs to the pyrroline-5-carboxylate reductase family.

The protein resides in the cytoplasm. It carries out the reaction L-proline + NADP(+) = (S)-1-pyrroline-5-carboxylate + NADPH + 2 H(+). The catalysed reaction is L-proline + NAD(+) = (S)-1-pyrroline-5-carboxylate + NADH + 2 H(+). The protein operates within amino-acid biosynthesis; L-proline biosynthesis; L-proline from L-glutamate 5-semialdehyde: step 1/1. Catalyzes the reduction of 1-pyrroline-5-carboxylate (PCA) to L-proline. The sequence is that of Pyrroline-5-carboxylate reductase from Staphylococcus aureus (strain Mu50 / ATCC 700699).